The primary structure comprises 364 residues: Valine dehydrogenase (364 aa).

Residue Lys91 is part of the active site. 191–197 (GVGKVGH) is a binding site for NAD(+).

It belongs to the Glu/Leu/Phe/Val dehydrogenases family. As to quaternary structure, homodimer.

It localises to the cytoplasm. It carries out the reaction L-valine + NAD(+) + H2O = 3-methyl-2-oxobutanoate + NH4(+) + NADH + H(+). It participates in amino-acid degradation; L-valine degradation. Its activity is regulated as follows. Repressed in minimal medium by the presence of glucose and NH4(+), glycerol and NH4(+), or glycerol and asparagine. In terms of biological role, oxidative deamination of branched-chain amino acids. Oxidizes L-valine and L-alpha-aminobutyric acid efficiently, and L-isoleucine and L-leucine less efficiently. Does not act on D-valine. The catabolism of L-valine is the major source of fatty acid precursors for macrolide biosynthesis and a vital source of antibiotic precursors. Uses NAD; no activity was found with NADP. This chain is Valine dehydrogenase (vdh), found in Streptomyces coelicolor (strain ATCC BAA-471 / A3(2) / M145).